Consider the following 1042-residue polypeptide: Putative type I restriction enzyme MjaIXP endonuclease subunit (1042 aa).

In terms of domain architecture, Helicase ATP-binding spans 323–487; it reads GETPEDRRIG…FLVFGDYISA (165 aa). Positions 439–442 match the DEAH box motif; it reads DEAH. The Helicase C-terminal domain maps to 551–731; that stretch reads LTEDYLSKVS…DIKVVIEEMK (181 aa).

Belongs to the HsdR family. The type I restriction/modification system is composed of three polypeptides R, M and S.

The enzyme catalyses Endonucleolytic cleavage of DNA to give random double-stranded fragments with terminal 5'-phosphates, ATP is simultaneously hydrolyzed.. The restriction (R) subunit of a type I restriction enzyme that recognizes 5'-CCAN(5)GTR-3' and cleaves a random distance away. The R subunit is required for both nuclease and ATPase activities, but not for modification. After locating a non-methylated recognition site, the enzyme complex serves as a molecular motor that translocates DNA in an ATP-dependent manner until a collision occurs that triggers cleavage. This Methanocaldococcus jannaschii (strain ATCC 43067 / DSM 2661 / JAL-1 / JCM 10045 / NBRC 100440) (Methanococcus jannaschii) protein is Putative type I restriction enzyme MjaIXP endonuclease subunit.